The primary structure comprises 249 residues: Cell division protein DivIB (249 aa).

Over 1–19 the chain is Cytoplasmic; the sequence is MKEENEYIVKRRKKRRRKR. Residues 20–40 form a helical membrane-spanning segment; sequence ITIFLFLLICILVTLCLKLPY. The POTRA domain maps to 41 to 109; the sequence is FNIKYINVEG…NTIDIIVKER (69 aa). Residues 41–249 lie on the Extracellular side of the membrane; that stretch reads FNIKYINVEG…KGNPVYSLQQ (209 aa).

This sequence belongs to the FtsQ/DivIB family. DivIB subfamily.

It is found in the cell membrane. In terms of biological role, cell division protein that may be involved in stabilizing or promoting the assembly of the division complex. The protein is Cell division protein DivIB of Clostridium acetobutylicum (strain ATCC 824 / DSM 792 / JCM 1419 / IAM 19013 / LMG 5710 / NBRC 13948 / NRRL B-527 / VKM B-1787 / 2291 / W).